A 281-amino-acid chain; its full sequence is tRNA uridine(34) hydroxylase (281 aa).

The Rhodanese domain occupies 121–214 (SQPDVLVIDT…YLEKTHNKSG (94 aa)). Catalysis depends on cysteine 174, which acts as the Cysteine persulfide intermediate.

Belongs to the TrhO family.

It catalyses the reaction uridine(34) in tRNA + AH2 + O2 = 5-hydroxyuridine(34) in tRNA + A + H2O. Catalyzes oxygen-dependent 5-hydroxyuridine (ho5U) modification at position 34 in tRNAs. The sequence is that of tRNA uridine(34) hydroxylase from Wolbachia pipientis subsp. Culex pipiens (strain wPip).